The chain runs to 365 residues: Aminomethyltransferase (365 aa).

The protein belongs to the GcvT family. The glycine cleavage system is composed of four proteins: P, T, L and H.

The catalysed reaction is N(6)-[(R)-S(8)-aminomethyldihydrolipoyl]-L-lysyl-[protein] + (6S)-5,6,7,8-tetrahydrofolate = N(6)-[(R)-dihydrolipoyl]-L-lysyl-[protein] + (6R)-5,10-methylene-5,6,7,8-tetrahydrofolate + NH4(+). The glycine cleavage system catalyzes the degradation of glycine. The protein is Aminomethyltransferase of Chlorobium luteolum (strain DSM 273 / BCRC 81028 / 2530) (Pelodictyon luteolum).